The chain runs to 378 residues: Probable endopolygalacturonase AFUB_016610 (378 aa).

The N-terminal stretch at 1–19 is a signal peptide; that stretch reads MLKLMGSLVLLASAAEVIA. Positions 20–35 are excised as a propeptide; it reads SPAAEPVAPSTTLEKR. Cysteines 38 and 56 form a disulfide. 3 PbH1 repeats span residues 147–169, 170–200, and 201–222; these read TSSSSITDLHILNTPVQAVSING, CDGLTITDITIDNSAGDTQGGHNTDAFDIGS, and SSNIIISGAKVYNQDDCVAVNS. The active-site Proton donor is Asp-215. Cys-217 and Cys-233 are oxidised to a cystine. The active site involves His-237. PbH1 repeat units follow at residues 252-273 and 281-303; these read VENVSFTNSQVTNSDNGLRIKA and IKGVTYSGITLSSIRKYGILIEQ. N-linked (GlcNAc...) asparagine glycosylation is present at Asn-254. N-linked (GlcNAc...) asparagine glycosylation is present at Asn-327. Cys-345 and Cys-350 form a disulfide bridge. Asn-352 is a glycosylation site (N-linked (GlcNAc...) asparagine). The cysteines at positions 369 and 378 are disulfide-linked.

This sequence belongs to the glycosyl hydrolase 28 family.

It localises to the secreted. It carries out the reaction (1,4-alpha-D-galacturonosyl)n+m + H2O = (1,4-alpha-D-galacturonosyl)n + (1,4-alpha-D-galacturonosyl)m.. In terms of biological role, involved in maceration and soft-rotting of plant tissue. Hydrolyzes the 1,4-alpha glycosidic bonds of de-esterified pectate in the smooth region of the plant cell wall. In Aspergillus fumigatus (strain CBS 144.89 / FGSC A1163 / CEA10) (Neosartorya fumigata), this protein is Probable endopolygalacturonase AFUB_016610.